The primary structure comprises 368 residues: Peptide chain release factor 2 (368 aa).

At Q250 the chain carries N5-methylglutamine.

The protein belongs to the prokaryotic/mitochondrial release factor family. Post-translationally, methylated by PrmC. Methylation increases the termination efficiency of RF2.

The protein resides in the cytoplasm. In terms of biological role, peptide chain release factor 2 directs the termination of translation in response to the peptide chain termination codons UGA and UAA. This is Peptide chain release factor 2 from Mycolicibacterium vanbaalenii (strain DSM 7251 / JCM 13017 / BCRC 16820 / KCTC 9966 / NRRL B-24157 / PYR-1) (Mycobacterium vanbaalenii).